Here is a 1039-residue protein sequence, read N- to C-terminus: Antigen 43 (1039 aa).

An N-terminal signal peptide occupies residues 1–52 (MKRHLNTCYRLVWNHMTGAFVVASELARARGKRGGVAVALSLAAVTSLPVLA). Positions 737–1039 (VNGENNSVRL…NGQATLNVTF (303 aa)) constitute an Autotransporter domain.

As to quaternary structure, interaction with TamA of the translocation and assembly module (TAM) initiates insertion in the outer membrane.

The protein resides in the periplasm. The protein localises to the secreted. Its subcellular location is the cell surface. It localises to the cell outer membrane. Controls colony form variation and autoaggregation. May function as an adhesin. The sequence is that of Antigen 43 (flu) from Escherichia coli (strain K12).